A 133-amino-acid polypeptide reads, in one-letter code: MVVNDTIADMLTRIRNANLARHQIVQVPATKMTCNMATVLKEEGFVQNFEQMGEGIETHLMISLKYNGKNRQPVITALKRISKPGLRVYANHKELPRVLGGLGIALISTSRGVMTDRQARHDGLGGEILCYIW.

The protein belongs to the universal ribosomal protein uS8 family. In terms of assembly, part of the 30S ribosomal subunit.

It localises to the plastid. Its subcellular location is the chloroplast. In terms of biological role, one of the primary rRNA binding proteins, it binds directly to 16S rRNA central domain where it helps coordinate assembly of the platform of the 30S subunit. The protein is Small ribosomal subunit protein uS8c (rps8) of Pyropia yezoensis (Susabi-nori).